We begin with the raw amino-acid sequence, 466 residues long: Glutamate--tRNA ligase (466 aa).

The 'HIGH' region motif lies at 10–20 (PSPTGFLHIGG). The short motif at 252–256 (KLSKR) is the 'KMSKS' region element. Lys-255 serves as a coordination point for ATP.

This sequence belongs to the class-I aminoacyl-tRNA synthetase family. Glutamate--tRNA ligase type 1 subfamily. In terms of assembly, monomer.

The protein localises to the cytoplasm. The enzyme catalyses tRNA(Glu) + L-glutamate + ATP = L-glutamyl-tRNA(Glu) + AMP + diphosphate. Its function is as follows. Catalyzes the attachment of glutamate to tRNA(Glu) in a two-step reaction: glutamate is first activated by ATP to form Glu-AMP and then transferred to the acceptor end of tRNA(Glu). The sequence is that of Glutamate--tRNA ligase from Mycoplasmopsis synoviae (strain 53) (Mycoplasma synoviae).